The sequence spans 101 residues: CRISPR-associated endoribonuclease Cas2 (101 aa).

Asp8 contributes to the Mg(2+) binding site.

This sequence belongs to the CRISPR-associated endoribonuclease Cas2 protein family. As to quaternary structure, homodimer, forms a heterotetramer with a Cas1 homodimer. The cofactor is Mg(2+).

CRISPR (clustered regularly interspaced short palindromic repeat), is an adaptive immune system that provides protection against mobile genetic elements (viruses, transposable elements and conjugative plasmids). CRISPR clusters contain sequences complementary to antecedent mobile elements and target invading nucleic acids. CRISPR clusters are transcribed and processed into CRISPR RNA (crRNA). Functions as a ssRNA-specific endoribonuclease. Involved in the integration of spacer DNA into the CRISPR cassette. The sequence is that of CRISPR-associated endoribonuclease Cas2 from Lacticaseibacillus rhamnosus (strain ATCC 53103 / LMG 18243 / GG) (Lactobacillus rhamnosus).